The following is a 278-amino-acid chain: Para-Rep C1 (278 aa).

A CRESS-DNA virus Rep endonuclease domain is found at 1–95 (MACSNWVFTR…VAGPWSYGDL (95 aa)). The short motif at 8-11 (FTRN) is the RCR-1 element. 2 residues coordinate a divalent metal cation: glutamate 33 and histidine 39. The RCR-2 motif lies at 39 to 41 (HIQ). The short motif at 48 to 69 (KKARFSTVKEIIGGNPHVEKMK) is the Nuclear localization signal element. Tyrosine 78 serves as the catalytic For DNA cleavage activity. Residues 78–81 (YVQK) carry the RCR-3 motif. Glutamate 83 is a binding site for a divalent metal cation. The Nuclear localization signal signature appears at 95-101 (LLKRGSH). 176–178 (GKS) provides a ligand contact to ATP.

It belongs to the nanoviridea/circoviridae replication-associated protein family. In terms of assembly, homooligomer (Potential). Rep binds to repeated DNA motifs (iterons). Mg(2+) is required as a cofactor. The cofactor is Mn(2+).

It localises to the host nucleus. It catalyses the reaction ATP + H2O = ADP + phosphate + H(+). Its function is as follows. Initiates and terminates the replication only of its own subviral DNA molecule. The closed circular ssDNA genome is first converted to a superhelical dsDNA. Rep binds a specific hairpin at the genome origin of replication. Introduces an endonucleolytic nick within the intergenic region of the genome, thereby initiating the rolling circle replication (RCR). Following cleavage, binds covalently to the 5'-phosphate of DNA as a tyrosyl ester. The cleavage gives rise to a free 3'-OH that serves as a primer for the cellular DNA polymerase. The polymerase synthesizes the (+) strand DNA by rolling circle mechanism. After one round of replication, a Rep-catalyzed nucleotidyl transfer reaction releases a circular single-stranded virus genome, thereby terminating the replication. Displays origin-specific DNA cleavage, nucleotidyl transferase, ATPase and helicase activities. The polypeptide is Para-Rep C1 (C1) (Faba bean necrotic yellows C1 alphasatellite (FBNYC1A)).